The primary structure comprises 97 residues: RNA-binding protein Hfq (97 aa).

Residues 10–70 enclose the Sm domain; the sequence is DPFLNALRKE…ISTIVPARSV (61 aa). The segment at 74–97 is disordered; sequence HENRPQAAPTSTLVQVETVQQPAE. Residues 81 to 97 are compositionally biased toward polar residues; it reads APTSTLVQVETVQQPAE.

This sequence belongs to the Hfq family. As to quaternary structure, homohexamer.

In terms of biological role, RNA chaperone that binds small regulatory RNA (sRNAs) and mRNAs to facilitate mRNA translational regulation in response to envelope stress, environmental stress and changes in metabolite concentrations. Also binds with high specificity to tRNAs. The sequence is that of RNA-binding protein Hfq from Neisseria meningitidis serogroup A / serotype 4A (strain DSM 15465 / Z2491).